A 364-amino-acid chain; its full sequence is Isopentenyl-diphosphate delta-isomerase (364 aa).

A compositionally biased stretch (basic and acidic residues) spans 1 to 13; it reads MSSAQRKDDHVRL. Residues 1–24 are disordered; that stretch reads MSSAQRKDDHVRLATEQQRAHSGR. Substrate is bound at residue 6–7; sequence RK. Residues 64–66, S94, and N123 contribute to the FMN site; that span reads AMT. Substrate is bound at residue 94 to 96; sequence SMH. Residue Q153 coordinates substrate. A Mg(2+)-binding site is contributed by E154. FMN contacts are provided by residues K185, S210, T215, 259 to 261, and 280 to 281; these read GIR and SG.

It belongs to the IPP isomerase type 2 family. Homooctamer. Dimer of tetramers. It depends on FMN as a cofactor. NADPH is required as a cofactor. The cofactor is Mg(2+).

The protein localises to the cytoplasm. It catalyses the reaction isopentenyl diphosphate = dimethylallyl diphosphate. Its function is as follows. Involved in the biosynthesis of isoprenoids. Catalyzes the 1,3-allylic rearrangement of the homoallylic substrate isopentenyl (IPP) to its allylic isomer, dimethylallyl diphosphate (DMAPP). In Kitasatospora griseola (Streptomyces griseolosporeus), this protein is Isopentenyl-diphosphate delta-isomerase.